We begin with the raw amino-acid sequence, 304 residues long: E3 ubiquitin-protein ligase RNF144B (304 aa).

The tract at residues 27 to 245 is TRIAD supradomain; that stretch reads PLVTCKLCLC…YDRGPCRNKL (219 aa). The Zn(2+) site is built by Cys-31, Cys-34, Cys-54, Cys-57, Cys-122, Cys-127, Cys-146, Cys-149, Cys-154, Cys-157, His-162, Cys-167, Cys-194, and Cys-197. The RING-type 1 zinc-finger motif lies at 31–81; that stretch reads CKLCLCEQSLDKMTTLQECRCIFCTACLKQYMQLAIREGCGSPITCPDMVC. The segment at 102–167 adopts an IBR-type zinc-finger fold; sequence QLYQRLKFER…KDAWHAEVSC (66 aa). The RING-type 2; atypical zinc finger occupies 194–223; the sequence is CPVCRVYIERNEGCAQMMCKNCKHTFCWYC. Cys-207 is an active-site residue. Residues Cys-212, Cys-215, Cys-220, Cys-223, His-235, and Cys-241 each coordinate Zn(2+). A helical transmembrane segment spans residues 259-279; sequence VVGILVGLGIIALVTSPLLLL.

The protein belongs to the RBR family. RNF144 subfamily. As to quaternary structure, interacts with UBE2L3, UBE2L6 and LCMT2, as well as with BAX. Interacts with TBK1; this interaction inhibits TBK1 phosphorylation and 'Lys-63'-linked polyubiquitination. In terms of processing, auto-ubiquitinated.

The protein resides in the mitochondrion membrane. It localises to the cytoplasm. It catalyses the reaction [E2 ubiquitin-conjugating enzyme]-S-ubiquitinyl-L-cysteine + [acceptor protein]-L-lysine = [E2 ubiquitin-conjugating enzyme]-L-cysteine + [acceptor protein]-N(6)-ubiquitinyl-L-lysine.. It functions in the pathway protein modification; protein ubiquitination. Its function is as follows. E3 ubiquitin-protein ligase which accepts ubiquitin from E2 ubiquitin-conjugating enzymes UBE2L3 and UBE2L6 in the form of a thioester and then directly transfers the ubiquitin to targeted substrates such as LCMT2, thereby promoting their degradation. Induces apoptosis via a p53/TP53-dependent but caspase-independent mechanism. Plays a crucial role in maintaining the genomic stability by controlling the degradation of multiple proteins involved in mitotic progression and DNA damage. Regulates epithelial homeostasis by mediating degradation of CDKN1A and isoform 2 of TP63. Plays a regulatory role in innate immunity by negatively regulating IRF3 activation and IFN-beta production. Mechanistically, inhibits TBK1 phosphorylation and 'Lys-63'-linked polyubiquitination independently of its E3 ligase activity. Alternatively, promotes 'Lys-27' and 'Lys-33'-linked ubiquitination of IFIH1/MDA5, promoting selective autophagic degradation of IFIH1/MDA5 to inhibit antiviral response. This Bos taurus (Bovine) protein is E3 ubiquitin-protein ligase RNF144B (RNF144B).